The primary structure comprises 196 residues: Pyridoxal 5'-phosphate synthase subunit PdxT (196 aa).

Position 47–49 (Gly-47–Ser-49) interacts with L-glutamine. Cys-79 (nucleophile) is an active-site residue. Residues Arg-106 and Ile-134 to Arg-135 contribute to the L-glutamine site. Active-site charge relay system residues include His-170 and Glu-172.

This sequence belongs to the glutaminase PdxT/SNO family. In the presence of PdxS, forms a dodecamer of heterodimers. Only shows activity in the heterodimer.

It catalyses the reaction aldehydo-D-ribose 5-phosphate + D-glyceraldehyde 3-phosphate + L-glutamine = pyridoxal 5'-phosphate + L-glutamate + phosphate + 3 H2O + H(+). The enzyme catalyses L-glutamine + H2O = L-glutamate + NH4(+). The protein operates within cofactor biosynthesis; pyridoxal 5'-phosphate biosynthesis. Functionally, catalyzes the hydrolysis of glutamine to glutamate and ammonia as part of the biosynthesis of pyridoxal 5'-phosphate. The resulting ammonia molecule is channeled to the active site of PdxS. In Halalkalibacterium halodurans (strain ATCC BAA-125 / DSM 18197 / FERM 7344 / JCM 9153 / C-125) (Bacillus halodurans), this protein is Pyridoxal 5'-phosphate synthase subunit PdxT.